We begin with the raw amino-acid sequence, 802 residues long: Lon protease (802 aa).

The 195-residue stretch at 17–211 (SIVMPLFEVV…LFLHILTKHK (195 aa)) folds into the Lon N-terminal domain. An ATP-binding site is contributed by 363-370 (GPPGTGKT). Residues 600–780 (ENVPGVVTGL…EEVLREALDI (181 aa)) enclose the Lon proteolytic domain. Active-site residues include serine 686 and lysine 729.

The protein belongs to the peptidase S16 family. Homohexamer. Organized in a ring with a central cavity.

The protein resides in the cytoplasm. The catalysed reaction is Hydrolysis of proteins in presence of ATP.. Its function is as follows. ATP-dependent serine protease that mediates the selective degradation of mutant and abnormal proteins as well as certain short-lived regulatory proteins. Required for cellular homeostasis and for survival from DNA damage and developmental changes induced by stress. Degrades polypeptides processively to yield small peptide fragments that are 5 to 10 amino acids long. Binds to DNA in a double-stranded, site-specific manner. This chain is Lon protease, found in Methanosarcina barkeri (strain Fusaro / DSM 804).